The primary structure comprises 601 residues: Membrane protein insertase YidC (601 aa).

Residues 10 to 30 (ISISLVILVLFQVIASYVLPP) traverse the membrane as a helical segment. The interval 34 to 63 (APPHPATQTAQTQPVSGQPAPGVPAPSAVP) is disordered. Low complexity predominate over residues 39 to 53 (ATQTAQTQPVSGQPA). The segment covering 54–63 (PGVPAPSAVP) has biased composition (pro residues). 4 consecutive transmembrane segments (helical) span residues 382 to 404 (FGNM…FPLV), 455 to 475 (LPML…FISI), 510 to 530 (ALSP…TMWG), and 549 to 569 (FMPV…VLYY).

Belongs to the OXA1/ALB3/YidC family. Type 1 subfamily. Interacts with the Sec translocase complex via SecD. Specifically interacts with transmembrane segments of nascent integral membrane proteins during membrane integration.

The protein localises to the cell inner membrane. Functionally, required for the insertion and/or proper folding and/or complex formation of integral membrane proteins into the membrane. Involved in integration of membrane proteins that insert both dependently and independently of the Sec translocase complex, as well as at least some lipoproteins. Aids folding of multispanning membrane proteins. In Acidiphilium cryptum (strain JF-5), this protein is Membrane protein insertase YidC.